The following is a 357-amino-acid chain: Phenylalanine--tRNA ligase alpha subunit (357 aa).

Residue Glu-278 coordinates Mg(2+).

It belongs to the class-II aminoacyl-tRNA synthetase family. Phe-tRNA synthetase alpha subunit type 1 subfamily. As to quaternary structure, tetramer of two alpha and two beta subunits. Mg(2+) is required as a cofactor.

It is found in the cytoplasm. It carries out the reaction tRNA(Phe) + L-phenylalanine + ATP = L-phenylalanyl-tRNA(Phe) + AMP + diphosphate + H(+). The polypeptide is Phenylalanine--tRNA ligase alpha subunit (Albidiferax ferrireducens (strain ATCC BAA-621 / DSM 15236 / T118) (Rhodoferax ferrireducens)).